Reading from the N-terminus, the 309-residue chain is 4-hydroxy-3-methylbut-2-enyl diphosphate reductase (309 aa).

Cys12 contacts [4Fe-4S] cluster. Residues His41 and His74 each coordinate (2E)-4-hydroxy-3-methylbut-2-enyl diphosphate. Dimethylallyl diphosphate-binding residues include His41 and His74. Residues His41 and His74 each coordinate isopentenyl diphosphate. [4Fe-4S] cluster is bound at residue Cys96. His124 lines the (2E)-4-hydroxy-3-methylbut-2-enyl diphosphate pocket. His124 lines the dimethylallyl diphosphate pocket. His124 is an isopentenyl diphosphate binding site. Glu126 acts as the Proton donor in catalysis. A (2E)-4-hydroxy-3-methylbut-2-enyl diphosphate-binding site is contributed by Thr167. Cys197 lines the [4Fe-4S] cluster pocket. Positions 225, 226, 227, and 269 each coordinate (2E)-4-hydroxy-3-methylbut-2-enyl diphosphate. Ser225, Ser226, Asn227, and Ser269 together coordinate dimethylallyl diphosphate. Ser225, Ser226, Asn227, and Ser269 together coordinate isopentenyl diphosphate.

Belongs to the IspH family. The cofactor is [4Fe-4S] cluster.

The enzyme catalyses isopentenyl diphosphate + 2 oxidized [2Fe-2S]-[ferredoxin] + H2O = (2E)-4-hydroxy-3-methylbut-2-enyl diphosphate + 2 reduced [2Fe-2S]-[ferredoxin] + 2 H(+). It carries out the reaction dimethylallyl diphosphate + 2 oxidized [2Fe-2S]-[ferredoxin] + H2O = (2E)-4-hydroxy-3-methylbut-2-enyl diphosphate + 2 reduced [2Fe-2S]-[ferredoxin] + 2 H(+). It participates in isoprenoid biosynthesis; dimethylallyl diphosphate biosynthesis; dimethylallyl diphosphate from (2E)-4-hydroxy-3-methylbutenyl diphosphate: step 1/1. The protein operates within isoprenoid biosynthesis; isopentenyl diphosphate biosynthesis via DXP pathway; isopentenyl diphosphate from 1-deoxy-D-xylulose 5-phosphate: step 6/6. Catalyzes the conversion of 1-hydroxy-2-methyl-2-(E)-butenyl 4-diphosphate (HMBPP) into a mixture of isopentenyl diphosphate (IPP) and dimethylallyl diphosphate (DMAPP). Acts in the terminal step of the DOXP/MEP pathway for isoprenoid precursor biosynthesis. This Colwellia psychrerythraea (strain 34H / ATCC BAA-681) (Vibrio psychroerythus) protein is 4-hydroxy-3-methylbut-2-enyl diphosphate reductase.